We begin with the raw amino-acid sequence, 445 residues long: F-box protein At5g10340 (445 aa).

The F-box domain occupies 64–112; the sequence is SMEELLPHDVIEYHIMVRLDVKTLLKFKSVSKQWMSTIQSPSFQERQLI.

The chain is F-box protein At5g10340 from Arabidopsis thaliana (Mouse-ear cress).